Reading from the N-terminus, the 244-residue chain is Glutathione S-transferase theta-2 (244 aa).

The GST N-terminal domain occupies 2-82 (GLELYLDLLS…YLSSKYQVAD (81 aa)). Glutathione-binding positions include 40–41 (HL), 53–54 (KV), 66–67 (ES), and 104–107 (DNIR). In terms of domain architecture, GST C-terminal spans 88-230 (DLQARAQVHE…AKKTLPVPPP (143 aa)).

It belongs to the GST superfamily. Theta family. As to quaternary structure, homodimer. As to expression, highest values found in liver followed by testis, adrenal gland, kidney, lung, brain and skeletal muscle. In liver, highest expression found in central vein limiting plate hepatocytes. In lung, expressed mainly in club cells of the bronchiolar epithelium and, at low levels, in type II alveolar cells.

It localises to the cytoplasm. Its subcellular location is the cytosol. It is found in the nucleus. It carries out the reaction RX + glutathione = an S-substituted glutathione + a halide anion + H(+). In terms of biological role, catalyzes the inactivation of reactive sulfate esters in carcinogenic arylmethanols. Highest activity towards ethacrynic acid and cumene hydroperoxide. The sequence is that of Glutathione S-transferase theta-2 (Gstt2) from Rattus norvegicus (Rat).